Consider the following 505-residue polypeptide: MFTSKSNSVSPSPSLEQADADALDISTKVQLYGVLWKRPFGRSSAKWSRRFFIIKESFLLYYSESERKSFETNKYFNIHPKGVIPLGGCLVEAREEPSMPYAMKISHQDFHGNVLLAAESEFEQTQWLEMLQESGKVTWKNAQLGEAMIKSLEAQGLQLAKEKQEYLDKLMEETEELCLQREQREELERLNQVLEAEKQQFEEVVQELKVEQEQIKRELELTARCLKGVEQEKKELRHLTESLQHTLEELSIEKKKTLEMLEEDKNQPQPLTNQSEQPPATDGLHSNLRQIEERMQELLAEKLLAEKRMKENEERSRALEEEREFYSSQSQALQNSLQELTAEKQQAEQELKAEVKVRMDLERRLREAEAALRSLEQGLNSKVRNKEKEERMRADVSHLKRFFEECIRNAELEAKMPVIMKNSVYIHKAATRRIKSCRFHRRRSSTSWNDMKPSQSFMTSQLEANNIEELKEVAKRLSRDQRFRESIYHIMATQPGASALPRGGK.

Residues 28 to 136 (KVQLYGVLWK…WLEMLQESGK (109 aa)) enclose the PH domain. The stretch at 146 to 391 (EAMIKSLEAQ…KVRNKEKEER (246 aa)) forms a coiled coil. The disordered stretch occupies residues 264–284 (DKNQPQPLTNQSEQPPATDGL). The span at 267 to 278 (QPQPLTNQSEQP) shows a compositional bias: polar residues. Omega-N-methylarginine is present on R502.

This sequence belongs to the PLEKHD1 family.

This chain is Pleckstrin homology domain-containing family D member 1 (Plekhd1), found in Rattus norvegicus (Rat).